Consider the following 393-residue polypeptide: tRNA-specific 2-thiouridylase MnmA (393 aa).

Residues 19–26 (AMSGGVDS) and L45 each bind ATP. C113 serves as the catalytic Nucleophile. C113 and C210 are joined by a disulfide. G137 provides a ligand contact to ATP. An interaction with tRNA region spans residues 160 to 162 (RDQ). C210 functions as the Cysteine persulfide intermediate in the catalytic mechanism.

This sequence belongs to the MnmA/TRMU family.

The protein resides in the cytoplasm. It carries out the reaction S-sulfanyl-L-cysteinyl-[protein] + uridine(34) in tRNA + AH2 + ATP = 2-thiouridine(34) in tRNA + L-cysteinyl-[protein] + A + AMP + diphosphate + H(+). Its function is as follows. Catalyzes the 2-thiolation of uridine at the wobble position (U34) of tRNA, leading to the formation of s(2)U34. This is tRNA-specific 2-thiouridylase MnmA from Afipia carboxidovorans (strain ATCC 49405 / DSM 1227 / KCTC 32145 / OM5) (Oligotropha carboxidovorans).